A 541-amino-acid polypeptide reads, in one-letter code: Valine N-monooxygenase 2 (541 aa).

Topologically, residues 1–18 (MAMNVSTTATTTASFAST) are cytoplasmic. Residues 19 to 41 (SSMNNTAKILLITLFISIVSTVI) traverse the membrane as a helical segment. The Lumenal portion of the chain corresponds to 42 to 541 (KLQKRASYKK…LAPHLYPTSP (500 aa)). Asn-277 is a glycosylation site (N-linked (GlcNAc...) asparagine). Cys-477 is a heme binding site. Asn-505 is a glycosylation site (N-linked (GlcNAc...) asparagine).

Belongs to the cytochrome P450 family. It depends on heme as a cofactor. As to expression, expressed in the epidermis, the next two cortex cell layers, the endodermis and the pericycle of leaf petioles. Strong expression around the laticifers among the phloem cells and in parenchymatic cells between the protoxylem and the metaxylem cells. In the leaves, preferentially expressed in the mesophyll cells adjacent to the epidermis.

The protein localises to the microsome membrane. The enzyme catalyses L-valine + 2 reduced [NADPH--hemoprotein reductase] + 2 O2 = (E)-2-methylpropanal oxime + 2 oxidized [NADPH--hemoprotein reductase] + CO2 + 3 H2O + 2 H(+). It catalyses the reaction L-valine + reduced [NADPH--hemoprotein reductase] + O2 = N-hydroxy-L-valine + oxidized [NADPH--hemoprotein reductase] + H2O + 2 H(+). It carries out the reaction N-hydroxy-L-valine + reduced [NADPH--hemoprotein reductase] + O2 = N,N-dihydroxy-L-valine + oxidized [NADPH--hemoprotein reductase] + H2O + H(+). The catalysed reaction is L-isoleucine + 2 reduced [NADPH--hemoprotein reductase] + 2 O2 = (1E,2S)-2-methylbutanal oxime + 2 oxidized [NADPH--hemoprotein reductase] + CO2 + 3 H2O + 2 H(+). The enzyme catalyses L-isoleucine + reduced [NADPH--hemoprotein reductase] + O2 = N-hydroxy-L-isoleucine + oxidized [NADPH--hemoprotein reductase] + H2O + 2 H(+). It catalyses the reaction N-hydroxy-L-isoleucine + reduced [NADPH--hemoprotein reductase] + O2 = N,N-dihydroxy-L-isoleucine + oxidized [NADPH--hemoprotein reductase] + H2O + H(+). Functionally, involved in the biosynthesis of the cyanogenic glucosides linamarin and lotaustralin. Can use L-valine or L-isoleucine as substrate. Catalyzes multi-step reactions starting with two successive N-hydroxylations using L-valine and L-isoleucine as substrates leading to the formation of N,N-dihydroxy-L-valine and N,N-dihydroxy-L-isoleucine, respectively; following spontaneous reactions lead to the production of (E)-2-methylpropanal oxime and (1E,2S)-2-methylbutanal oxime, respectively. This chain is Valine N-monooxygenase 2, found in Manihot esculenta (Cassava).